The following is a 302-amino-acid chain: Probable 2-(5''-triphosphoribosyl)-3'-dephosphocoenzyme-A synthase 1 (302 aa).

The protein belongs to the CitG/MdcB family.

It catalyses the reaction 3'-dephospho-CoA + ATP = 2'-(5''-triphospho-alpha-D-ribosyl)-3'-dephospho-CoA + adenine. The protein is Probable 2-(5''-triphosphoribosyl)-3'-dephosphocoenzyme-A synthase 1 of Salmonella paratyphi A (strain ATCC 9150 / SARB42).